The primary structure comprises 366 residues: Probable dual-specificity RNA methyltransferase RlmN (366 aa).

Glu-107 serves as the catalytic Proton acceptor. The region spanning 113-342 is the Radical SAM core domain; it reads AEERMTACLS…MAQKFHVTVR (230 aa). Cys-120 and Cys-353 are oxidised to a cystine. Residues Cys-127, Cys-131, and Cys-134 each coordinate [4Fe-4S] cluster. S-adenosyl-L-methionine-binding positions include 177–178, Ser-210, 233–235, and Asn-310; these read GE and SLH. The active-site S-methylcysteine intermediate is Cys-353.

This sequence belongs to the radical SAM superfamily. RlmN family. It depends on [4Fe-4S] cluster as a cofactor.

It is found in the cytoplasm. The enzyme catalyses adenosine(2503) in 23S rRNA + 2 reduced [2Fe-2S]-[ferredoxin] + 2 S-adenosyl-L-methionine = 2-methyladenosine(2503) in 23S rRNA + 5'-deoxyadenosine + L-methionine + 2 oxidized [2Fe-2S]-[ferredoxin] + S-adenosyl-L-homocysteine. It carries out the reaction adenosine(37) in tRNA + 2 reduced [2Fe-2S]-[ferredoxin] + 2 S-adenosyl-L-methionine = 2-methyladenosine(37) in tRNA + 5'-deoxyadenosine + L-methionine + 2 oxidized [2Fe-2S]-[ferredoxin] + S-adenosyl-L-homocysteine. In terms of biological role, specifically methylates position 2 of adenine 2503 in 23S rRNA and position 2 of adenine 37 in tRNAs. The sequence is that of Probable dual-specificity RNA methyltransferase RlmN from Chlorobium chlorochromatii (strain CaD3).